A 391-amino-acid chain; its full sequence is NAD(P)H-quinone oxidoreductase subunit H, chloroplastic (391 aa).

It belongs to the complex I 49 kDa subunit family. In terms of assembly, NDH is composed of at least 16 different subunits, 5 of which are encoded in the nucleus.

Its subcellular location is the plastid. The protein resides in the chloroplast thylakoid membrane. It catalyses the reaction a plastoquinone + NADH + (n+1) H(+)(in) = a plastoquinol + NAD(+) + n H(+)(out). It carries out the reaction a plastoquinone + NADPH + (n+1) H(+)(in) = a plastoquinol + NADP(+) + n H(+)(out). NDH shuttles electrons from NAD(P)H:plastoquinone, via FMN and iron-sulfur (Fe-S) centers, to quinones in the photosynthetic chain and possibly in a chloroplast respiratory chain. The immediate electron acceptor for the enzyme in this species is believed to be plastoquinone. Couples the redox reaction to proton translocation, and thus conserves the redox energy in a proton gradient. This is NAD(P)H-quinone oxidoreductase subunit H, chloroplastic from Physcomitrium patens (Spreading-leaved earth moss).